The sequence spans 439 residues: Chitinase-like protein Idgf1 (439 aa).

The first 20 residues, 1-20 (MRFQLFYILGLLSVTSLTQA), serve as a signal peptide directing secretion. A GH18 domain is found at 22–439 (NNLVCYYDST…IVRSIKYFMG (418 aa)). Residues Cys-26 and Cys-53 are joined by a disulfide bond. 3 N-linked (GlcNAc...) asparagine glycosylation sites follow: Asn-122, Asn-218, and Asn-346. A disulfide bridge links Cys-340 with Cys-423.

The protein belongs to the glycosyl hydrolase 18 family. IDGF subfamily. Post-translationally, glycosylated.

It localises to the secreted. In terms of biological role, cooperates with insulin-like peptides to stimulate the proliferation, polarization and motility of imaginal disk cells. May act by stabilizing the binding of insulin-like peptides to its receptor through a simultaneous interaction with both molecules to form a multiprotein signaling complex. The polypeptide is Chitinase-like protein Idgf1 (Idgf1) (Drosophila simulans (Fruit fly)).